A 1699-amino-acid polypeptide reads, in one-letter code: Eukaryotic translation initiation factor 2-alpha kinase gcn-2 (1699 aa).

The RWD domain maps to 22–138; sequence EEKLALDAVY…HRVREFLTDH (117 aa). Protein kinase domains lie at 108–507 and 508–999; these read LTIL…DVVL and VRNK…DEDL. Residues 114–122, Lys-154, 497–505, and Lys-520 each bind ATP; these read MADTWEGCV and LGRGGFGDV. 2 disordered regions span residues 572-615 and 632-725; these read DSSL…SLMP and KEWS…SVFE. The segment covering 669 to 706 has biased composition (acidic residues); that stretch reads SSDDEDDDDSSEIDWDAESEEVEDEESDDSDEEDEDDG. Over residues 711–720 the composition is skewed to polar residues; it reads QLNTETSTGA. Catalysis depends on Asp-829, which acts as the Proton acceptor.

The protein belongs to the protein kinase superfamily. Ser/Thr protein kinase family. GCN2 subfamily.

It catalyses the reaction L-seryl-[protein] + ATP = O-phospho-L-seryl-[protein] + ADP + H(+). The enzyme catalyses L-threonyl-[protein] + ATP = O-phospho-L-threonyl-[protein] + ADP + H(+). Its function is as follows. Serine/threonine-protein kinase which phosphorylates the alpha subunit of eukaryotic translation-initiation factor 2 (eIF2alpha), leading to its inactivation and thus to a rapid reduction of translational initiation and repression of global protein synthesis. Involved in the unfolded protein response (UPR) triggered by several stresses including mitochondrial, osmotic and oxidative stresses, amino acid deprivation and UV irradiation, probably by phosphorylating and inhibiting eIF2alpha. In addition, leads to the selective translation/transcription of some mRNA including atf-5, pha-4 and gpdh-1 which are part of the UPR. Required for maintaining lifespan during amino acid starvation. Involved in hypoxia-mediated adaptive protective response. The sequence is that of Eukaryotic translation initiation factor 2-alpha kinase gcn-2 from Caenorhabditis elegans.